A 551-amino-acid polypeptide reads, in one-letter code: E3 ubiquitin-protein ligase TRIM8 (551 aa).

The RING-type zinc-finger motif lies at 15 to 56; sequence CPICLHVFVEPVQLPCKHNFCRGCIGEAWAKDSGLVRCPECN. B box-type zinc fingers lie at residues 92 to 132 and 140 to 182; these read CVFC…ARGH and VRAW…VCDV. Residues 181-249 adopt a coiled-coil conformation; it reads DVEIRRNEIR…HQLLDEDLRQ (69 aa).

The protein belongs to the TRIM/RBCC family. As to quaternary structure, homodimer. Interacts with SOCS1 (via) SH2 domain and SOCS box. Interacts with HSP90AB1; prevents nucleus translocation of phosphorylated STAT3 and HSP90AB1. Interacts with MAP3K7/TAK1. Interacts with PIAS3. Interacts with TICAM1. Interacts with TRIM15; this interaction prevents TRIM8 cytoplasmic translocation. As to expression, widely expressed. Expressed in glomerular podocytes of kidneys.

The protein localises to the cytoplasm. The protein resides in the nucleus. Its subcellular location is the nuclear body. It carries out the reaction S-ubiquitinyl-[E2 ubiquitin-conjugating enzyme]-L-cysteine + [acceptor protein]-L-lysine = [E2 ubiquitin-conjugating enzyme]-L-cysteine + N(6)-ubiquitinyl-[acceptor protein]-L-lysine.. The protein operates within protein modification; protein ubiquitination. Its function is as follows. E3 ubiquitin-protein ligase that participates in multiple biological processes including cell survival, differentiation, apoptosis, and in particular, the innate immune response. Participates in the activation of interferon-gamma signaling by promoting proteasomal degradation of the repressor SOCS1. Plays a positive role in the TNFalpha and IL-1beta signaling pathways. Mechanistically, induces the 'Lys-63'-linked polyubiquitination of MAP3K7/TAK1 component leading to the activation of NF-kappa-B. Also modulates STAT3 activity through negative regulation of PIAS3, either by degradation of PIAS3 through the ubiquitin-proteasome pathway or exclusion of PIAS3 from the nucleus. Negatively regulates TLR3/4-mediated innate immune response by catalyzing 'Lys-6'- and 'Lys-33'-linked polyubiquitination of TICAM1 and thereby disrupting the TICAM1-TBK1 interaction. The sequence is that of E3 ubiquitin-protein ligase TRIM8 (TRIM8) from Homo sapiens (Human).